The chain runs to 312 residues: Olfactory receptor 1F1 (312 aa).

The Extracellular segment spans residues 1-25; the sequence is MSGTNQSSVSEFLLLGLSRQPQQQH. Residue N5 is glycosylated (N-linked (GlcNAc...) asparagine). The chain crosses the membrane as a helical span at residues 26–49; that stretch reads LLFVFFLSMYLATVLGNLLIILSV. The Cytoplasmic portion of the chain corresponds to 50 to 57; sequence SIDSCLHT. The chain crosses the membrane as a helical span at residues 58-79; it reads PMYFFLSNLSFVDICFSFTTVP. Over 80 to 100 the chain is Extracellular; the sequence is KMLANHILETQTISFCGCLTQ. A disulfide bridge connects residues C97 and C189. The chain crosses the membrane as a helical span at residues 101–120; sequence MYFVFMFVDMDNFLLAVMAY. The Cytoplasmic portion of the chain corresponds to 121 to 139; sequence DHFVAVCHPLHYTAKMTHQ. The helical transmembrane segment at 140 to 158 threads the bilayer; it reads LCALLVAGLWVVANLNVLL. Over 159–196 the chain is Extracellular; the sequence is HTLLMAPLSFCADNAITHFFCDVTPLLKLSCSDTHLNE. The chain crosses the membrane as a helical span at residues 197–219; sequence VIILSEGALVMITPFLCILASYM. At 220 to 236 the chain is on the cytoplasmic side; the sequence is HITCTVLKVPSTKGRWK. Residues 237-259 form a helical membrane-spanning segment; it reads AFSTCGSHLAVVLLFYSTIIAVY. At 260–272 the chain is on the extracellular side; that stretch reads FNPLSSHSAEKDT. Residues 273–292 form a helical membrane-spanning segment; the sequence is MATVLYTVVTPMLNPFIYSL. Over 293–312 the chain is Cytoplasmic; that stretch reads RNRYLKGALKKVVGRVVFSV.

It belongs to the G-protein coupled receptor 1 family.

The protein resides in the cell membrane. Its function is as follows. Odorant receptor. This is Olfactory receptor 1F1 (OR1F1) from Homo sapiens (Human).